The primary structure comprises 780 residues: Endonuclease MutS2 (780 aa).

334 to 341 provides a ligand contact to ATP; the sequence is GPNAGGKT. Residues 706–780 enclose the Smr domain; that stretch reads IDIRGMRSVD…GGSGKTIVEI (75 aa).

It belongs to the DNA mismatch repair MutS family. MutS2 subfamily. As to quaternary structure, homodimer. Binds to stalled ribosomes, contacting rRNA.

In terms of biological role, endonuclease that is involved in the suppression of homologous recombination and thus may have a key role in the control of bacterial genetic diversity. Its function is as follows. Acts as a ribosome collision sensor, splitting the ribosome into its 2 subunits. Detects stalled/collided 70S ribosomes which it binds and splits by an ATP-hydrolysis driven conformational change. Acts upstream of the ribosome quality control system (RQC), a ribosome-associated complex that mediates the extraction of incompletely synthesized nascent chains from stalled ribosomes and their subsequent degradation. Probably generates substrates for RQC. The polypeptide is Endonuclease MutS2 (Borreliella burgdorferi (strain ATCC 35210 / DSM 4680 / CIP 102532 / B31) (Borrelia burgdorferi)).